Reading from the N-terminus, the 296-residue chain is 4-diphosphocytidyl-2-C-methyl-D-erythritol kinase (296 aa).

Residue K13 is part of the active site. 98–108 (PVAAGIGGGSA) is an ATP binding site. Residue D140 is part of the active site.

This sequence belongs to the GHMP kinase family. IspE subfamily.

The catalysed reaction is 4-CDP-2-C-methyl-D-erythritol + ATP = 4-CDP-2-C-methyl-D-erythritol 2-phosphate + ADP + H(+). Its pathway is isoprenoid biosynthesis; isopentenyl diphosphate biosynthesis via DXP pathway; isopentenyl diphosphate from 1-deoxy-D-xylulose 5-phosphate: step 3/6. Functionally, catalyzes the phosphorylation of the position 2 hydroxy group of 4-diphosphocytidyl-2C-methyl-D-erythritol. In Rhodopseudomonas palustris (strain HaA2), this protein is 4-diphosphocytidyl-2-C-methyl-D-erythritol kinase.